A 95-amino-acid polypeptide reads, in one-letter code: Aspartyl/glutamyl-tRNA(Asn/Gln) amidotransferase subunit C (95 aa).

It belongs to the GatC family. Heterotrimer of A, B and C subunits.

The catalysed reaction is L-glutamyl-tRNA(Gln) + L-glutamine + ATP + H2O = L-glutaminyl-tRNA(Gln) + L-glutamate + ADP + phosphate + H(+). The enzyme catalyses L-aspartyl-tRNA(Asn) + L-glutamine + ATP + H2O = L-asparaginyl-tRNA(Asn) + L-glutamate + ADP + phosphate + 2 H(+). In terms of biological role, allows the formation of correctly charged Asn-tRNA(Asn) or Gln-tRNA(Gln) through the transamidation of misacylated Asp-tRNA(Asn) or Glu-tRNA(Gln) in organisms which lack either or both of asparaginyl-tRNA or glutaminyl-tRNA synthetases. The reaction takes place in the presence of glutamine and ATP through an activated phospho-Asp-tRNA(Asn) or phospho-Glu-tRNA(Gln). In Methylococcus capsulatus (strain ATCC 33009 / NCIMB 11132 / Bath), this protein is Aspartyl/glutamyl-tRNA(Asn/Gln) amidotransferase subunit C.